A 277-amino-acid polypeptide reads, in one-letter code: Proteasome subunit beta type-7 (277 aa).

Residues 1 to 43 (MAAVSVYERPVGGFSFDNCRRNAVLEADFAKKGYKLPTARKTG) constitute a propeptide, removed in mature form. Catalysis depends on Thr44, which acts as the Nucleophile.

This sequence belongs to the peptidase T1B family. The 26S proteasome consists of a 20S proteasome core and two 19S regulatory subunits. The 20S proteasome core is a barrel-shaped complex made of 28 subunits that are arranged in four stacked rings. The two outer rings are each formed by seven alpha subunits, and the two inner rings are formed by seven beta subunits. The proteolytic activity is exerted by three beta-subunits PSMB5, PSMB6 and PSMB7.

It is found in the cytoplasm. Its subcellular location is the nucleus. The catalysed reaction is Cleavage of peptide bonds with very broad specificity.. Functionally, component of the 20S core proteasome complex involved in the proteolytic degradation of most intracellular proteins. This complex plays numerous essential roles within the cell by associating with different regulatory particles. Associated with two 19S regulatory particles, forms the 26S proteasome and thus participates in the ATP-dependent degradation of ubiquitinated proteins. The 26S proteasome plays a key role in the maintenance of protein homeostasis by removing misfolded or damaged proteins that could impair cellular functions, and by removing proteins whose functions are no longer required. Associated with the PA200 or PA28, the 20S proteasome mediates ubiquitin-independent protein degradation. This type of proteolysis is required in several pathways including spermatogenesis (20S-PA200 complex) or generation of a subset of MHC class I-presented antigenic peptides (20S-PA28 complex). Within the 20S core complex, PSMB7 displays a trypsin-like activity. In Bos taurus (Bovine), this protein is Proteasome subunit beta type-7 (PSMB7).